The chain runs to 482 residues: Butyrophilin-like protein 2 (482 aa).

Residues 1–6 lie on the Cytoplasmic side of the membrane; sequence MVDFPG. Residues 7 to 23 form a helical; Signal-anchor for type II membrane protein membrane-spanning segment; that stretch reads YNLSGAVASFLFILLTM. The Extracellular segment spans residues 24-482; it reads KQSEDFRVIG…VAVGLPRKRS (459 aa). Ig-like V-type domains are found at residues 29–140, 142–234, and 236–355; these read FRVI…LLLK, AGLG…SVIS, and PEKL…ASLD. Cystine bridges form between Cys-50-Cys-124, Cys-164-Cys-218, and Cys-267-Cys-341. Residue Asn-210 is glycosylated (N-linked (GlcNAc...) asparagine). Asn-427 carries an N-linked (GlcNAc...) asparagine glycan.

This sequence belongs to the immunoglobulin superfamily. BTN/MOG family. As to expression, expressed in brain, heart, kidney, liver, pancreas, ovary, leukocyte, small intestine, testis and thymus.

Its subcellular location is the membrane. Its function is as follows. Negative regulator of T-cell proliferation. This is Butyrophilin-like protein 2 from Homo sapiens (Human).